Here is a 348-residue protein sequence, read N- to C-terminus: Phospho-2-dehydro-3-deoxyheptonate aldolase, Trp-sensitive (348 aa).

The protein belongs to the class-I DAHP synthase family.

The catalysed reaction is D-erythrose 4-phosphate + phosphoenolpyruvate + H2O = 7-phospho-2-dehydro-3-deoxy-D-arabino-heptonate + phosphate. It functions in the pathway metabolic intermediate biosynthesis; chorismate biosynthesis; chorismate from D-erythrose 4-phosphate and phosphoenolpyruvate: step 1/7. Functionally, stereospecific condensation of phosphoenolpyruvate (PEP) and D-erythrose-4-phosphate (E4P) giving rise to 3-deoxy-D-arabino-heptulosonate-7-phosphate (DAHP). This is Phospho-2-dehydro-3-deoxyheptonate aldolase, Trp-sensitive (aroH) from Escherichia coli (strain K12).